The primary structure comprises 490 residues: tRNA-guanine(15) transglycosylase (490 aa).

The Nucleophile role is filled by D90. Residues D125 and A193 each coordinate substrate. Residues C276, C278, and C281 each contribute to the Zn(2+) site.

It belongs to the archaeosine tRNA-ribosyltransferase family. Zn(2+) serves as cofactor.

It carries out the reaction guanosine(15) in tRNA + 7-cyano-7-deazaguanine = 7-cyano-7-carbaguanosine(15) in tRNA + guanine. It participates in tRNA modification; archaeosine-tRNA biosynthesis. Exchanges the guanine residue with 7-cyano-7-deazaguanine (preQ0) at position 15 in the dihydrouridine loop (D-loop) of archaeal tRNAs. This Methanosarcina acetivorans (strain ATCC 35395 / DSM 2834 / JCM 12185 / C2A) protein is tRNA-guanine(15) transglycosylase.